Here is a 474-residue protein sequence, read N- to C-terminus: 3-isopropylmalate dehydratase large subunit (474 aa).

3 residues coordinate [4Fe-4S] cluster: Cys355, Cys415, and Cys418.

This sequence belongs to the aconitase/IPM isomerase family. LeuC type 1 subfamily. As to quaternary structure, heterodimer of LeuC and LeuD. [4Fe-4S] cluster serves as cofactor.

It carries out the reaction (2R,3S)-3-isopropylmalate = (2S)-2-isopropylmalate. It participates in amino-acid biosynthesis; L-leucine biosynthesis; L-leucine from 3-methyl-2-oxobutanoate: step 2/4. Catalyzes the isomerization between 2-isopropylmalate and 3-isopropylmalate, via the formation of 2-isopropylmaleate. The sequence is that of 3-isopropylmalate dehydratase large subunit from Shewanella sp. (strain MR-4).